Reading from the N-terminus, the 175-residue chain is Endoribonuclease YbeY (175 aa).

Zn(2+) contacts are provided by His121, His125, and His131. Residues 154–175 form a disordered region; that stretch reads PDPYSPAQQESQAQPENTELNP. The span at 159-175 shows a compositional bias: polar residues; it reads PAQQESQAQPENTELNP.

The protein belongs to the endoribonuclease YbeY family. Zn(2+) serves as cofactor.

The protein resides in the cytoplasm. Single strand-specific metallo-endoribonuclease involved in late-stage 70S ribosome quality control and in maturation of the 3' terminus of the 16S rRNA. This Alcanivorax borkumensis (strain ATCC 700651 / DSM 11573 / NCIMB 13689 / SK2) protein is Endoribonuclease YbeY.